Here is a 518-residue protein sequence, read N- to C-terminus: Protein nucleotidyltransferase YdiU (518 aa).

A compositionally biased stretch (basic and acidic residues) spans 1 to 10; it reads MTHLRFDNRL. The tract at residues 1–23 is disordered; the sequence is MTHLRFDNRLRQQLPGDPEEGSR. 8 residues coordinate ATP: Gly100, Gly102, Arg103, Lys123, Asp135, Gly136, Arg193, and Arg200. Asp270 (proton acceptor) is an active-site residue. Asn271 and Asp280 together coordinate Mg(2+). ATP is bound at residue Asp280.

This sequence belongs to the SELO family. Requires Mg(2+) as cofactor. It depends on Mn(2+) as a cofactor.

It carries out the reaction L-seryl-[protein] + ATP = 3-O-(5'-adenylyl)-L-seryl-[protein] + diphosphate. The enzyme catalyses L-threonyl-[protein] + ATP = 3-O-(5'-adenylyl)-L-threonyl-[protein] + diphosphate. The catalysed reaction is L-tyrosyl-[protein] + ATP = O-(5'-adenylyl)-L-tyrosyl-[protein] + diphosphate. It catalyses the reaction L-histidyl-[protein] + UTP = N(tele)-(5'-uridylyl)-L-histidyl-[protein] + diphosphate. It carries out the reaction L-seryl-[protein] + UTP = O-(5'-uridylyl)-L-seryl-[protein] + diphosphate. The enzyme catalyses L-tyrosyl-[protein] + UTP = O-(5'-uridylyl)-L-tyrosyl-[protein] + diphosphate. In terms of biological role, nucleotidyltransferase involved in the post-translational modification of proteins. It can catalyze the addition of adenosine monophosphate (AMP) or uridine monophosphate (UMP) to a protein, resulting in modifications known as AMPylation and UMPylation. The sequence is that of Protein nucleotidyltransferase YdiU from Xanthomonas axonopodis pv. citri (strain 306).